The chain runs to 472 residues: Calcitonin gene-related peptide type 1 receptor (472 aa).

A signal peptide spans 1-28; that stretch reads MGLLLRSALFKYIIIVLIMLNLRGYVLA. Residues 29–149 lie on the Extracellular side of the membrane; it reads EQEQGSQIPL…FTHEKVKTAL (121 aa). 3 cysteine pairs are disulfide-bonded: C58–C84, C75–C115, and C98–C137. N-linked (GlcNAc...) asparagine glycosylation is found at N76, N128, and N133. A helical membrane pass occupies residues 150-174; that stretch reads NLYYLTIIGHGLSIASLLISLGIFF. Topologically, residues 175 to 185 are cytoplasmic; that stretch reads YFKNLSCQRIT. Residues 186-208 traverse the membrane as a helical segment; the sequence is LHKNLFFSFVCNSIITIISLSAV. Residues 209–219 lie on the Extracellular side of the membrane; it reads ANNQALVATNP. A helical transmembrane segment spans residues 220-248; sequence VSCKISQFIHLYLMGCNYFWMLCEGIYLH. The Cytoplasmic portion of the chain corresponds to 249 to 262; that stretch reads TLIVVAVFAEKQHL. Residues 263–283 form a helical membrane-spanning segment; it reads MWYYLLGWGFPLIPACIHAVA. Residues 284–299 are Extracellular-facing; sequence RSLYYNDNCWISSETH. Residues 300–324 traverse the membrane as a helical segment; sequence LLYIIHGPICAALLVNLFFLLNIVR. The Cytoplasmic segment spans residues 325–339; it reads VLITKLKVTHQAESN. Residues 340-361 form a helical membrane-spanning segment; sequence LYMKAVRATLILVPLLGIEFVL. The Extracellular portion of the chain corresponds to 362–376; sequence FPWKPEGRIAEEIYD. Residues 377 to 397 traverse the membrane as a helical segment; it reads YVMHILMHYQGLLVATIFCFF. Over 398–472 the chain is Cytoplasmic; sequence NGEVQAVLKR…VFFKTEKQYM (75 aa).

The protein belongs to the G-protein coupled receptor 2 family.

It localises to the cell membrane. In terms of biological role, may function as G protein-coupled receptor for calcitonin-gene-related peptides and adrenomedullin. Specificity may be modulated by accessory proteins. May activate cAMP-dependent pathway. The sequence is that of Calcitonin gene-related peptide type 1 receptor (calcrl) from Xenopus tropicalis (Western clawed frog).